A 610-amino-acid chain; its full sequence is Glucoamylase ARB_02327-1 (610 aa).

Residues 1–18 (MRVTSLLWSSLVIPAAVG) form the signal peptide. A propeptide spanning residues 19–24 (FQVRFK) is cleaved from the precursor. The N-linked (GlcNAc...) asparagine glycan is linked to Asn49. Trp143 contacts substrate. An N-linked (GlcNAc...) asparagine glycan is attached at Asn194. Residue Asp199 is the Proton acceptor of the active site. Residue Glu202 is the Proton donor of the active site. 3 disulfides stabilise this stretch: Cys233-Cys236, Cys245-Cys472, and Cys285-Cys293. Residues 504–610 (TALPTKNNVR…SGAIKRDTWR (107 aa)) enclose the CBM20 domain.

Belongs to the glycosyl hydrolase 15 family.

The protein localises to the secreted. The catalysed reaction is Hydrolysis of terminal (1-&gt;4)-linked alpha-D-glucose residues successively from non-reducing ends of the chains with release of beta-D-glucose.. The sequence is that of Glucoamylase ARB_02327-1 from Arthroderma benhamiae (strain ATCC MYA-4681 / CBS 112371) (Trichophyton mentagrophytes).